Consider the following 287-residue polypeptide: 4-hydroxybenzoate octaprenyltransferase (287 aa).

The next 9 helical transmembrane spans lie at 21 to 41, 44 to 64, 91 to 111, 112 to 132, 139 to 159, 160 to 180, 211 to 231, 235 to 255, and 263 to 283; these read VGIF…AKGA, FKIA…GCIV, VTEA…LVLL, LNRL…VYPF, LPQL…FAAT, VGHV…WPIV, LMIG…GWYL, YWFY…QFLI, and CFAA…GILL.

The protein belongs to the UbiA prenyltransferase family. It depends on Mg(2+) as a cofactor.

The protein localises to the cell inner membrane. The catalysed reaction is all-trans-octaprenyl diphosphate + 4-hydroxybenzoate = 4-hydroxy-3-(all-trans-octaprenyl)benzoate + diphosphate. It functions in the pathway cofactor biosynthesis; ubiquinone biosynthesis. Functionally, catalyzes the prenylation of para-hydroxybenzoate (PHB) with an all-trans polyprenyl group. Mediates the second step in the final reaction sequence of ubiquinone-8 (UQ-8) biosynthesis, which is the condensation of the polyisoprenoid side chain with PHB, generating the first membrane-bound Q intermediate 3-octaprenyl-4-hydroxybenzoate. The chain is 4-hydroxybenzoate octaprenyltransferase from Coxiella burnetii (strain CbuG_Q212) (Coxiella burnetii (strain Q212)).